We begin with the raw amino-acid sequence, 396 residues long: Gamma-D-glutamyl-L-diamino acid endopeptidase 1 (396 aa).

LysM domains are found at residues 1–45 (MDIL…RIQI) and 51–95 (TSYT…TIQV). Positions 108–394 (QNYDYSMMMN…EALGIFLAGL (287 aa)) constitute a Peptidase M14 domain. Positions 162 and 165 each coordinate Zn(2+). Asp255 lines the substrate pocket. His307 serves as a coordination point for Zn(2+). Catalysis depends on Tyr347, which acts as the Proton donor. Glu366 (proton donor/acceptor) is an active-site residue.

Belongs to the peptidase M14 family. It depends on Zn(2+) as a cofactor.

The catalysed reaction is Hydrolysis of gamma-D-glutamyl bonds to the L-terminus (position 7) of meso-diaminopimelic acid (meso-A2pm) in 7-(L-Ala-gamma-D-Glu)-meso-A2pm and 7-(L-Ala-gamma-D-Glu)-7-(D-Ala)-meso-A2pm. It is required that the D-terminal amino and carboxy groups of meso-A2pm are unsubstituted.. Functionally, an endopeptidase which hydrolyzes the gamma-D-Glu-(L)meso-diaminopimelic acid bond of L-Ala-gamma-D-Glu-(L)meso-diaminopimelic acid and L-Ala-gamma-D-Glu-(L)meso-diaminopimelic acid(L)-D-Ala peptides. It is active on spore cortex peptidoglycan. This is Gamma-D-glutamyl-L-diamino acid endopeptidase 1 from Lysinibacillus sphaericus (Bacillus sphaericus).